Reading from the N-terminus, the 149-residue chain is Calmodulin (149 aa).

Residue alanine 2 is modified to N-acetylalanine. 4 EF-hand domains span residues 8 to 43 (EQIAEFKEAFSLFDKDGDGTITTKELGTVMRSLGQN), 44 to 79 (PTEAELADMINEVDADGNGTIDFPEFLTMMARKMKD), 81 to 116 (DSEEEILEAFKVFDKDGNGFISAAELRHIMTNLGEK), and 117 to 149 (LTDEEVDEMIREADIDGDGQINYEEFVKMMMSK). Ca(2+) contacts are provided by aspartate 21, aspartate 23, aspartate 25, threonine 27, glutamate 32, aspartate 57, aspartate 59, asparagine 61, threonine 63, glutamate 68, aspartate 94, aspartate 96, asparagine 98, and glutamate 105. Lysine 116 bears the N6,N6,N6-trimethyllysine mark. Ca(2+) is bound by residues aspartate 130, aspartate 132, aspartate 134, glutamine 136, and glutamate 141.

This sequence belongs to the calmodulin family.

Calmodulin mediates the control of a large number of enzymes, ion channels and other proteins by Ca(2+). Among the enzymes to be stimulated by the calmodulin-Ca(2+) complex are a number of protein kinases and phosphatases. This chain is Calmodulin (cam), found in Saccharina japonica (Sweet kelp).